Consider the following 175-residue polypeptide: Glutamyl-tRNA(Gln) amidotransferase subunit C, mitochondrial (175 aa).

This sequence belongs to the GatC family. In terms of assembly, subunit of the heterotrimeric GatCAB amidotransferase (AdT) complex, composed of A, B and C subunits.

Its subcellular location is the mitochondrion. It catalyses the reaction L-glutamyl-tRNA(Gln) + L-glutamine + ATP + H2O = L-glutaminyl-tRNA(Gln) + L-glutamate + ADP + phosphate + H(+). Allows the formation of correctly charged Gln-tRNA(Gln) through the transamidation of misacylated Glu-tRNA(Gln) in the mitochondria. The reaction takes place in the presence of glutamine and ATP through an activated gamma-phospho-Glu-tRNA(Gln). The chain is Glutamyl-tRNA(Gln) amidotransferase subunit C, mitochondrial from Caenorhabditis elegans.